Reading from the N-terminus, the 326-residue chain is Malate dehydrogenase (326 aa).

NAD(+) is bound at residue 12–18 (GGTGQIA). Substrate contacts are provided by Arg93 and Arg99. NAD(+) is bound by residues Asn106, Gln113, and 130–132 (VGN). Substrate is bound by residues Asn132 and Arg163. The active-site Proton acceptor is the His188.

The protein belongs to the LDH/MDH superfamily. MDH type 2 family.

It carries out the reaction (S)-malate + NAD(+) = oxaloacetate + NADH + H(+). Its function is as follows. Catalyzes the reversible oxidation of malate to oxaloacetate. This chain is Malate dehydrogenase, found in Chlamydia trachomatis serovar L2 (strain ATCC VR-902B / DSM 19102 / 434/Bu).